Consider the following 303-residue polypeptide: MKVLLIAGGWSSERDVSLAGARGIEKALCALGHDVTWFDPATSLDGLLEAASSHDFAFINLHGSPGEDGLVQAMLDTAGCPYQGSGPAGSFLALNKAVSKQLLRRHGILTPDWAFLAARPAADWEPGLGYPLFVKPNTGGSSLCLSRVTQPEGLAPALEAVFAHCGEAIVEPAIPGVEVTCGVLGDTALPPILIRPAEGAFFDYTSKYTPGGATELCPAPLPAEVTAHVQDVTLRAHRLLGLRGYSRADYILRDDGALFLLEVNTLPGMTPTSLVPQEAAAIGLDFPALIARLIELGMTAAGR.

Residues 100 to 295 form the ATP-grasp domain; sequence KQLLRRHGIL…FPALIARLIE (196 aa). ATP is bound at residue 127–180; that stretch reads GLGYPLFVKPNTGGSSLCLSRVTQPEGLAPALEAVFAHCGEAIVEPAIPGVEVT. Asp-249, Glu-262, and Asn-264 together coordinate Mg(2+).

Belongs to the D-alanine--D-alanine ligase family. Mg(2+) is required as a cofactor. Requires Mn(2+) as cofactor.

The protein localises to the cytoplasm. The enzyme catalyses 2 D-alanine + ATP = D-alanyl-D-alanine + ADP + phosphate + H(+). The protein operates within cell wall biogenesis; peptidoglycan biosynthesis. In terms of biological role, cell wall formation. The chain is D-alanine--D-alanine ligase from Nitratidesulfovibrio vulgaris (strain ATCC 29579 / DSM 644 / CCUG 34227 / NCIMB 8303 / VKM B-1760 / Hildenborough) (Desulfovibrio vulgaris).